Here is a 380-residue protein sequence, read N- to C-terminus: N5-carboxyaminoimidazole ribonucleotide synthase (380 aa).

ATP contacts are provided by residues Arg108, Lys148, 153 to 159, 183 to 186, Glu191, His214, and 268 to 269; these read GYDGKGQ, ESWV, and NE. The ATP-grasp domain occupies 112–298; sequence KKAIQSAGCE…QFEQHIRAVC (187 aa).

It belongs to the PurK/PurT family. In terms of assembly, homodimer.

The enzyme catalyses 5-amino-1-(5-phospho-beta-D-ribosyl)imidazole + hydrogencarbonate + ATP = 5-carboxyamino-1-(5-phospho-D-ribosyl)imidazole + ADP + phosphate + 2 H(+). It participates in purine metabolism; IMP biosynthesis via de novo pathway; 5-amino-1-(5-phospho-D-ribosyl)imidazole-4-carboxylate from 5-amino-1-(5-phospho-D-ribosyl)imidazole (N5-CAIR route): step 1/2. Functionally, catalyzes the ATP-dependent conversion of 5-aminoimidazole ribonucleotide (AIR) and HCO(3)(-) to N5-carboxyaminoimidazole ribonucleotide (N5-CAIR). This Bacillus subtilis (strain 168) protein is N5-carboxyaminoimidazole ribonucleotide synthase.